The primary structure comprises 174 residues: Protein C2-DOMAIN ABA-RELATED 2 (174 aa).

The residue at position 1 (methionine 1) is an N-acetylmethionine. The C2 domain maps to 1-104 (MENMLGLLRL…EAIRIQNQLG (104 aa)). Residues arginine 21, aspartate 22, aspartate 27, aspartate 73, arginine 74, aspartate 75, and aspartate 81 each contribute to the Ca(2+) site.

It belongs to the plant CAR protein family. In terms of assembly, binds to PYR/PYL/RCAR abscisic acid intracellular receptors in an ABA-independent manner, both at the plasma membrane and in the nucleus. Requires Ca(2+) as cofactor.

It is found in the cell membrane. The protein localises to the nucleus. Functionally, stimulates the GTPase/ATPase activities of Obg-like ATPases. Mediates the transient calcium-dependent interaction of PYR/PYL/RCAR abscisic acid (ABA) receptors with the plasma membrane and thus regulates ABA sensitivity. The sequence is that of Protein C2-DOMAIN ABA-RELATED 2 from Arabidopsis thaliana (Mouse-ear cress).